The primary structure comprises 194 residues: Outer surface 22 kDa lipoprotein (194 aa).

Residues 1-21 (MYKNGFFKNYLSLFLIFLVIA) form the signal peptide. A lipid anchor (N-palmitoyl cysteine) is attached at cysteine 22. Cysteine 22 carries the S-diacylglycerol cysteine lipid modification.

It is found in the cell outer membrane. The sequence is that of Outer surface 22 kDa lipoprotein (p22) from Borreliella burgdorferi (strain ZS7) (Borrelia burgdorferi).